A 154-amino-acid polypeptide reads, in one-letter code: Spermatogenesis-associated protein 19, mitochondrial (154 aa).

The N-terminal 24 residues, 1–24 (MIITTWIVYILARKGAGLPFPPKV), are a transit peptide targeting the mitochondrion. A phosphoserine mark is found at serine 26 and serine 116.

The protein localises to the mitochondrion outer membrane. It is found in the mitochondrion. The protein resides in the cell projection. Its subcellular location is the cilium. It localises to the flagellum. Functionally, essential for sperm motility and male fertility. Plays an important role in sperm motility by regulating the organization and function of the mitochondria and is also required for correct sperm midpiece assembly. In Bos taurus (Bovine), this protein is Spermatogenesis-associated protein 19, mitochondrial (SPATA19).